The primary structure comprises 734 residues: Photosystem I P700 chlorophyll a apoprotein A2 (734 aa).

Helical transmembrane passes span 46–69, 135–158, 175–199, 273–291, 330–353, 369–395, 417–439, and 517–535; these read IFAS…FHVA, LYTG…LHLQ, LNHH…HVAI, MAHH…GHMY, IHFQ…QHMY, AALY…IFFI, AIIS…LYVH, and FLVH…LILV. Cysteine 559 and cysteine 568 together coordinate [4Fe-4S] cluster. Helical transmembrane passes span 575-596 and 643-665; these read AFYL…YWHW and LSVW…MFLI. Chlorophyll a contacts are provided by histidine 654, methionine 662, and tyrosine 670. Tryptophan 671 is a binding site for phylloquinone. A helical membrane pass occupies residues 707-727; that stretch reads LVGLAHFSVGYIFTYAAFLIA.

It belongs to the PsaA/PsaB family. As to quaternary structure, the PsaA/B heterodimer binds the P700 chlorophyll special pair and subsequent electron acceptors. PSI consists of a core antenna complex that captures photons, and an electron transfer chain that converts photonic excitation into a charge separation. The eukaryotic PSI reaction center is composed of at least 11 subunits. Requires P700 is a chlorophyll a/chlorophyll a' dimer, A0 is one or more chlorophyll a, A1 is one or both phylloquinones and FX is a shared 4Fe-4S iron-sulfur center. as cofactor.

The protein localises to the plastid. Its subcellular location is the chloroplast thylakoid membrane. The catalysed reaction is reduced [plastocyanin] + hnu + oxidized [2Fe-2S]-[ferredoxin] = oxidized [plastocyanin] + reduced [2Fe-2S]-[ferredoxin]. Its function is as follows. PsaA and PsaB bind P700, the primary electron donor of photosystem I (PSI), as well as the electron acceptors A0, A1 and FX. PSI is a plastocyanin-ferredoxin oxidoreductase, converting photonic excitation into a charge separation, which transfers an electron from the donor P700 chlorophyll pair to the spectroscopically characterized acceptors A0, A1, FX, FA and FB in turn. Oxidized P700 is reduced on the lumenal side of the thylakoid membrane by plastocyanin. In Lobularia maritima (Sweet alyssum), this protein is Photosystem I P700 chlorophyll a apoprotein A2.